The following is a 569-amino-acid chain: GATOR1 complex protein NPRL3 (569 aa).

2 disordered regions span residues 27-60 (PFQR…EQDG) and 416-477 (PSEE…GDSP). Composition is skewed to polar residues over residues 34-52 (HPAS…SNTG) and 438-468 (SLST…NSSA). Residue S476 is modified to Phosphoserine.

The protein belongs to the NPR3 family. Within the GATOR complex, component of the GATOR1 subcomplex, made of DEPDC5, NPRL2 and NPRL3. GATOR1 mediates the strong interaction of the GATOR complex with small GTPases Rag (RagA/RRAGA, RagB/RRAGB, RagC/RRAGC and/or RagD/RRAGD) heterodimers. GATOR1 interacts with GPR155/LYCHOS; interaction takes place in presence of cholesterol and prevents interaction between GATOR1 and KICSTOR. As to expression, widely expressed. Expressed in the frontal lobe cortex as well as in the temporal, parietal, and occipital lobes.

Its subcellular location is the lysosome membrane. Its function is as follows. As a component of the GATOR1 complex functions as an inhibitor of the amino acid-sensing branch of the mTORC1 pathway. In response to amino acid depletion, the GATOR1 complex has GTPase activating protein (GAP) activity and strongly increases GTP hydrolysis by RagA/RRAGA (or RagB/RRAGB) within heterodimeric Rag complexes, thereby turning them into their inactive GDP-bound form, releasing mTORC1 from lysosomal surface and inhibiting mTORC1 signaling. In the presence of abundant amino acids, the GATOR1 complex is negatively regulated by GATOR2, the other GATOR subcomplex, in this amino acid-sensing branch of the TORC1 pathway. This Homo sapiens (Human) protein is GATOR1 complex protein NPRL3.